Consider the following 163-residue polypeptide: ATP synthase subunit b 1 (163 aa).

Residues A7–V27 traverse the membrane as a helical segment.

Belongs to the ATPase B chain family. F-type ATPases have 2 components, F(1) - the catalytic core - and F(0) - the membrane proton channel. F(1) has five subunits: alpha(3), beta(3), gamma(1), delta(1), epsilon(1). F(0) has three main subunits: a(1), b(2) and c(10-14). The alpha and beta chains form an alternating ring which encloses part of the gamma chain. F(1) is attached to F(0) by a central stalk formed by the gamma and epsilon chains, while a peripheral stalk is formed by the delta and b chains.

The protein localises to the cell inner membrane. In terms of biological role, f(1)F(0) ATP synthase produces ATP from ADP in the presence of a proton or sodium gradient. F-type ATPases consist of two structural domains, F(1) containing the extramembraneous catalytic core and F(0) containing the membrane proton channel, linked together by a central stalk and a peripheral stalk. During catalysis, ATP synthesis in the catalytic domain of F(1) is coupled via a rotary mechanism of the central stalk subunits to proton translocation. Component of the F(0) channel, it forms part of the peripheral stalk, linking F(1) to F(0). In Rhodopseudomonas palustris (strain ATCC BAA-98 / CGA009), this protein is ATP synthase subunit b 1.